The chain runs to 2837 residues: Bifunctional DNA-directed RNA polymerase subunit beta-beta' (2837 aa).

The interval M1 to D1433 is DNA-directed RNA polymerase subunit beta. The segment at I1436–N2837 is DNA-directed RNA polymerase subunit beta'. 4 residues coordinate Zn(2+): C1501, C1503, C1516, and C1519. Mg(2+) contacts are provided by D1893, D1895, and D1897. Zn(2+) is bound by residues C2235, C2309, C2316, and C2319.

In the N-terminal section; belongs to the RNA polymerase beta chain family. This sequence in the C-terminal section; belongs to the RNA polymerase beta' chain family. As to quaternary structure, the RNAP catalytic core consists of 2 alpha, 1 beta/beta' and 1 omega subunit. When a sigma factor is associated with the core the holoenzyme is formed, which can initiate transcription. Mg(2+) is required as a cofactor. It depends on Zn(2+) as a cofactor.

The enzyme catalyses RNA(n) + a ribonucleoside 5'-triphosphate = RNA(n+1) + diphosphate. Functionally, DNA-dependent RNA polymerase catalyzes the transcription of DNA into RNA using the four ribonucleoside triphosphates as substrates. The chain is Bifunctional DNA-directed RNA polymerase subunit beta-beta' (rpoBC) from Wolbachia pipientis wMel.